A 264-amino-acid chain; its full sequence is Methylthioribulose-1-phosphate dehydratase (264 aa).

C110 is a binding site for substrate. Zn(2+) is bound by residues H128 and H130. E151 serves as the catalytic Proton donor/acceptor. H213 provides a ligand contact to Zn(2+).

Belongs to the aldolase class II family. MtnB subfamily. The cofactor is Zn(2+).

It localises to the cytoplasm. The catalysed reaction is 5-(methylsulfanyl)-D-ribulose 1-phosphate = 5-methylsulfanyl-2,3-dioxopentyl phosphate + H2O. It functions in the pathway amino-acid biosynthesis; L-methionine biosynthesis via salvage pathway; L-methionine from S-methyl-5-thio-alpha-D-ribose 1-phosphate: step 2/6. Its function is as follows. Catalyzes the dehydration of methylthioribulose-1-phosphate (MTRu-1-P) into 2,3-diketo-5-methylthiopentyl-1-phosphate (DK-MTP-1-P). This chain is Methylthioribulose-1-phosphate dehydratase, found in Vanderwaltozyma polyspora (strain ATCC 22028 / DSM 70294 / BCRC 21397 / CBS 2163 / NBRC 10782 / NRRL Y-8283 / UCD 57-17) (Kluyveromyces polysporus).